Here is a 114-residue protein sequence, read N- to C-terminus: Pole-localizer protein TmaR (114 aa).

Positions 70–111 (RDDYESRVDDYTIRNAELSKQRREASTKMKEQKKAHAELLKN) form a coiled coil. The disordered stretch occupies residues 89–114 (KQRREASTKMKEQKKAHAELLKNAEK).

This sequence belongs to the pole-localizer TmaR family.

It localises to the cytoplasm. Its function is as follows. Pole-localizer protein involved in the regulation of several cellular processes. The sequence is that of Pole-localizer protein TmaR from Haemophilus influenzae (strain 86-028NP).